We begin with the raw amino-acid sequence, 840 residues long: Mechanosensitive ion channel protein Msy2 (840 aa).

Topologically, residues 1–68 are cytoplasmic; it reads MNEHRREPHR…WFNNLSFITR (68 aa). The helical transmembrane segment at 69-89 threads the bilayer; it reads WITIWFPLAGALVIPLAVGVS. Over 90-100 the chain is Lumenal; sequence PYPNAKLGGVR. A helical transmembrane segment spans residues 101 to 121; that stretch reads IFWIFVWLEVAWGGFWVSRVI. Residues 122–126 are Cytoplasmic-facing; the sequence is ARLLP. Residues 127-147 form a helical membrane-spanning segment; sequence YILYPLMGILPFTMYKYTVIL. Residues 148-151 are Lumenal-facing; the sequence is TALE. Residues 152–172 traverse the membrane as a helical segment; sequence MPLAIFFCSIVCVCTFSPIMI. At 173 to 225 the chain is on the cytoplasmic side; sequence GKGNFTSTTVTTTTSATATPTASASSNAVESVFVTKTAASVPSWIKVITKILG. Residues 226 to 246 traverse the membrane as a helical segment; sequence AAVVTSIVLLLEKIFLHFIGF. Topologically, residues 247 to 449 are lumenal; the sequence is HYHEVQYQYR…LALGKLDRVG (203 aa). The region spanning 392-427 is the EF-hand domain; sequence IPDDEINDIFHILDNDYSRTVTLDEMEQFTREISIE. A helical membrane pass occupies residues 450 to 491; sequence LGVVGIIAVLTFISFLDTSFATILAAFGTTLLSLSFVFSTSA. Residues 492 to 840 are Cytoplasmic-facing; it reads QELMSSIIFL…SQNMDGQIQY (349 aa). Disordered regions lie at residues 677–730 and 775–819; these read EYSK…KRED and ESNG…NTQA. Residues 688 to 700 show a composition bias toward low complexity; that stretch reads SDISSTASSNSLS. Basic and acidic residues predominate over residues 708–730; the sequence is SESRNYHTHDEDNSSDDNHKRED. A compositionally biased stretch (low complexity) spans 776–819; the sequence is SNGNANGDNTATNSQGATDNGQTTTNTTQNNVDNTQATTDNTQA.

The protein belongs to the MscS (TC 1.A.23) family.

It localises to the endoplasmic reticulum membrane. Functionally, regulates intracellular calcium levels and cell volume for survival in response to hypo-osmotic shock. Involved in maintaining vacuole integrity and protecting the nuclear envelope upon hypo-osmotic shock. The sequence is that of Mechanosensitive ion channel protein Msy2 from Schizosaccharomyces pombe (strain 972 / ATCC 24843) (Fission yeast).